The primary structure comprises 261 residues: Cytochrome c oxidase subunit 3 (261 aa).

Residues 1–15 (MTHQTHAYHMVNPSP) lie on the Mitochondrial matrix side of the membrane. Residues 16–34 (WPLTGALSALLMTSGLIMW) traverse the membrane as a helical segment. The Mitochondrial intermembrane segment spans residues 35–40 (FHFNST). The helical transmembrane segment at 41–66 (ALLMLGLTTNMLTMYQWWRDIVREST) threads the bilayer. Residues 67–72 (FQGHHT) are Mitochondrial matrix-facing. A helical membrane pass occupies residues 73 to 105 (PTVQKGLRYGMILFIISEVLFFTGFFWAFYHSS). Topologically, residues 106 to 128 (LAPTPELGGCWPPTGIHPLNPLE) are mitochondrial intermembrane. A helical transmembrane segment spans residues 129 to 152 (VPLLNTSVLLASGVSITWAHHSLM). The Mitochondrial matrix portion of the chain corresponds to 153–155 (EGN). Residues 156-183 (RNHMLQALFITIALGVYFTLLQASEYYE) traverse the membrane as a helical segment. Topologically, residues 184-190 (APFTISD) are mitochondrial intermembrane. Residues 191–223 (GVYGSTFFVATGFHGLHVIIGSTFLIVCFFRQL) traverse the membrane as a helical segment. Topologically, residues 224 to 232 (KFHFTSNHH) are mitochondrial matrix. Residues 233–256 (FGFEAAAWYWHFVDVVWLFLYVSI) form a helical membrane-spanning segment. At 257 to 261 (YWWGS) the chain is on the mitochondrial intermembrane side.

The protein belongs to the cytochrome c oxidase subunit 3 family. As to quaternary structure, component of the cytochrome c oxidase (complex IV, CIV), a multisubunit enzyme composed of 14 subunits. The complex is composed of a catalytic core of 3 subunits MT-CO1, MT-CO2 and MT-CO3, encoded in the mitochondrial DNA, and 11 supernumerary subunits COX4I, COX5A, COX5B, COX6A, COX6B, COX6C, COX7A, COX7B, COX7C, COX8 and NDUFA4, which are encoded in the nuclear genome. The complex exists as a monomer or a dimer and forms supercomplexes (SCs) in the inner mitochondrial membrane with NADH-ubiquinone oxidoreductase (complex I, CI) and ubiquinol-cytochrome c oxidoreductase (cytochrome b-c1 complex, complex III, CIII), resulting in different assemblies (supercomplex SCI(1)III(2)IV(1) and megacomplex MCI(2)III(2)IV(2)).

It localises to the mitochondrion inner membrane. The enzyme catalyses 4 Fe(II)-[cytochrome c] + O2 + 8 H(+)(in) = 4 Fe(III)-[cytochrome c] + 2 H2O + 4 H(+)(out). Component of the cytochrome c oxidase, the last enzyme in the mitochondrial electron transport chain which drives oxidative phosphorylation. The respiratory chain contains 3 multisubunit complexes succinate dehydrogenase (complex II, CII), ubiquinol-cytochrome c oxidoreductase (cytochrome b-c1 complex, complex III, CIII) and cytochrome c oxidase (complex IV, CIV), that cooperate to transfer electrons derived from NADH and succinate to molecular oxygen, creating an electrochemical gradient over the inner membrane that drives transmembrane transport and the ATP synthase. Cytochrome c oxidase is the component of the respiratory chain that catalyzes the reduction of oxygen to water. Electrons originating from reduced cytochrome c in the intermembrane space (IMS) are transferred via the dinuclear copper A center (CU(A)) of subunit 2 and heme A of subunit 1 to the active site in subunit 1, a binuclear center (BNC) formed by heme A3 and copper B (CU(B)). The BNC reduces molecular oxygen to 2 water molecules using 4 electrons from cytochrome c in the IMS and 4 protons from the mitochondrial matrix. In Cephalophorus natalensis (Natal red duiker), this protein is Cytochrome c oxidase subunit 3 (MT-CO3).